The chain runs to 597 residues: Putative Xaa-Pro dipeptidyl-peptidase (597 aa).

Catalysis depends on charge relay system residues Ser-224, Asp-336, and His-367.

Belongs to the peptidase S15 family.

It carries out the reaction Hydrolyzes Xaa-Pro-|- bonds to release unblocked, N-terminal dipeptides from substrates including Ala-Pro-|-p-nitroanilide and (sequentially) Tyr-Pro-|-Phe-Pro-|-Gly-Pro-|-Ile.. The chain is Putative Xaa-Pro dipeptidyl-peptidase from Bacillus anthracis.